Here is a 314-residue protein sequence, read N- to C-terminus: Serine protease 46 (314 aa).

A Peptidase S1 domain is found at 44–281 (VVNGKVVEVG…FTQWIKRQIG (238 aa)). Residues Cys-69 and Cys-85 are joined by a disulfide bond. Active-site charge relay system residues include His-84 and Asp-130. Disulfide bonds link Cys-164/Cys-239, Cys-197/Cys-219, and Cys-229/Cys-257. The Charge relay system role is filled by Ser-233. Residues 293-313 (FLSPFILTGYILLVSLGSLWL) traverse the membrane as a helical segment.

It belongs to the peptidase S1 family.

The protein localises to the membrane. The protein is Serine protease 46 (Prss46) of Rattus norvegicus (Rat).